Consider the following 559-residue polypeptide: Leucine-rich repeat-containing protein 71 (559 aa).

Positions 1 to 18 (MSSEQSAPGASPRAPRPG) are enriched in low complexity. A disordered region spans residues 1 to 56 (MSSEQSAPGASPRAPRPGTQKSSGAVTKKGERAAKEKPATVLPPVGEEEPKSPEEY). A compositionally biased stretch (basic and acidic residues) spans 28-38 (KKGERAAKEKP). 5 LRR repeats span residues 172–193 (NLWK…LPLC), 196–216 (TLRK…HKLM), 221–241 (TIAH…QLLG), 253–266 (TLVS…HIGD), and 281–302 (SLLW…KLAE). Composition is skewed to basic and acidic residues over residues 324–348 (KGTQ…REKS) and 380–391 (KSWELAKKEEKL). The interval 324–427 (KGTQERSRSP…PEQKPSRAKG (104 aa)) is disordered.

This is Leucine-rich repeat-containing protein 71 (LRRC71) from Homo sapiens (Human).